The chain runs to 51 residues: Large ribosomal subunit protein eL39 (51 aa).

Belongs to the eukaryotic ribosomal protein eL39 family.

In Pyrococcus abyssi (strain GE5 / Orsay), this protein is Large ribosomal subunit protein eL39 (rpl39e).